A 327-amino-acid polypeptide reads, in one-letter code: Zinc transport protein ZntB (327 aa).

The Cytoplasmic portion of the chain corresponds to 1 to 273 (MEAIKGSDVN…ARRTYTMSLM (273 aa)). Residues 274 to 294 (AMVFLPSTFLTGLFGVNLGGI) traverse the membrane as a helical segment. Residues 295–300 (PGGGWQ) lie on the Periplasmic side of the membrane. The helical transmembrane segment at 301 to 321 (FGFSIFCILLVVLIGGVALWL) threads the bilayer. The Cytoplasmic portion of the chain corresponds to 322–327 (HRSKWL).

It belongs to the CorA metal ion transporter (MIT) (TC 1.A.35) family.

The protein resides in the cell inner membrane. It catalyses the reaction Zn(2+)(out) + H(+)(out) = Zn(2+)(in) + H(+)(in). Its function is as follows. Zinc transporter. Acts as a Zn(2+):proton symporter, which likely mediates zinc ion uptake. The protein is Zinc transport protein ZntB of Escherichia coli O139:H28 (strain E24377A / ETEC).